The chain runs to 209 residues: Protein lin-28 homolog A (209 aa).

The interval 1–31 is disordered; the sequence is MGSVSNQQFAGGCAKAAEEAPEEAPEDAARA. Gly2 carries the N-acetylglycine modification. Residue Ser3 is modified to Phosphoserine. Residues 39–112 enclose the CSD domain; that stretch reads HGAGICKWFN…GLESIRVTGP (74 aa). A flexible linker region spans residues 113–136; the sequence is GGVFCIGSERRPKGKSMQKRRSKG. Ser120 carries the post-translational modification Phosphoserine. 2 CCHC-type zinc fingers span residues 137–154 and 159–176; these read DRCY…ECKL and KKCH…SCPL. Positions 178–209 are disordered; the sequence is AQQGPSAQGKPTYFREEEEEIHSPTLLPEAQN. Ser200 carries the post-translational modification Phosphoserine.

It belongs to the lin-28 family. In terms of assembly, monomer. During skeletal muscle differentiation, associated with translation initiation complexes in the polysomal compartment. Directly interacts with EIF3S2. Interacts with NCL in an RNA-dependent manner. Interacts (via C-terminus) with DHX9 (via N- and C-terminus); this interaction occurs in a RNA-independent manner. Interacts with TUT4 in the presence of pre-let-7 RNA. In terms of tissue distribution, expressed in embryonic stem cells, placenta and testis. Tends to be up-regulated in HER2-overexpressing breast tumors.

It localises to the cytoplasm. It is found in the rough endoplasmic reticulum. The protein localises to the P-body. Its subcellular location is the stress granule. The protein resides in the nucleus. It localises to the nucleolus. Its function is as follows. RNA-binding protein that inhibits processing of pre-let-7 miRNAs and regulates translation of mRNAs that control developmental timing, pluripotency and metabolism. Seems to recognize a common structural G-quartet (G4) feature in its miRNA and mRNA targets. 'Translational enhancer' that drives specific mRNAs to polysomes and increases the efficiency of protein synthesis. Its association with the translational machinery and target mRNAs results in an increased number of initiation events per molecule of mRNA and, indirectly, in mRNA stabilization. Binds IGF2 mRNA, MYOD1 mRNA, ARBP/36B4 ribosomal protein mRNA and its own mRNA. Essential for skeletal muscle differentiation program through the translational up-regulation of IGF2 expression. Suppressor of microRNA (miRNA) biogenesis, including that of let-7, miR107, miR-143 and miR-200c. Specifically binds the miRNA precursors (pre-miRNAs), recognizing an 5'-GGAG-3' motif found in pre-miRNA terminal loop, and recruits TUT4 and TUT7 uridylyltransferases. This results in the terminal uridylation of target pre-miRNAs. Uridylated pre-miRNAs fail to be processed by Dicer and undergo degradation. The repression of let-7 expression is required for normal development and contributes to maintain the pluripotent state by preventing let-7-mediated differentiation of embryonic stem cells. Localized to the periendoplasmic reticulum area, binds to a large number of spliced mRNAs and inhibits the translation of mRNAs destined for the ER, reducing the synthesis of transmembrane proteins, ER or Golgi lumen proteins, and secretory proteins. Binds to and enhances the translation of mRNAs for several metabolic enzymes, such as PFKP, PDHA1 or SDHA, increasing glycolysis and oxidative phosphorylation. Which, with the let-7 repression may enhance tissue repair in adult tissue. The polypeptide is Protein lin-28 homolog A (LIN28A) (Homo sapiens (Human)).